Here is a 284-residue protein sequence, read N- to C-terminus: Bifunctional protein FolD (284 aa).

NADP(+) is bound by residues 164-166 and Ser189; that span reads GRS.

The protein belongs to the tetrahydrofolate dehydrogenase/cyclohydrolase family. As to quaternary structure, homodimer.

The catalysed reaction is (6R)-5,10-methylene-5,6,7,8-tetrahydrofolate + NADP(+) = (6R)-5,10-methenyltetrahydrofolate + NADPH. The enzyme catalyses (6R)-5,10-methenyltetrahydrofolate + H2O = (6R)-10-formyltetrahydrofolate + H(+). The protein operates within one-carbon metabolism; tetrahydrofolate interconversion. Its function is as follows. Catalyzes the oxidation of 5,10-methylenetetrahydrofolate to 5,10-methenyltetrahydrofolate and then the hydrolysis of 5,10-methenyltetrahydrofolate to 10-formyltetrahydrofolate. In Listeria innocua serovar 6a (strain ATCC BAA-680 / CLIP 11262), this protein is Bifunctional protein FolD.